The chain runs to 380 residues: Cytochrome b (380 aa).

Helical transmembrane passes span 34–54, 78–99, 114–134, and 179–199; these read FGSL…LLAM, WLIR…YLHI, WNTG…GYVL, and FFAL…IHLT. Heme b is bound by residues His84 and His98. Positions 183 and 197 each coordinate heme b. His202 serves as a coordination point for a ubiquinone. 4 helical membrane passes run 227–247, 289–309, 321–341, and 348–368; these read LKDI…ALFS, LGGV…PFLH, ISQL…WVGS, and FIII…VLFP.

It belongs to the cytochrome b family. The cytochrome bc1 complex contains 11 subunits: 3 respiratory subunits (MT-CYB, CYC1 and UQCRFS1), 2 core proteins (UQCRC1 and UQCRC2) and 6 low-molecular weight proteins (UQCRH/QCR6, UQCRB/QCR7, UQCRQ/QCR8, UQCR10/QCR9, UQCR11/QCR10 and a cleavage product of UQCRFS1). This cytochrome bc1 complex then forms a dimer. It depends on heme b as a cofactor.

The protein resides in the mitochondrion inner membrane. Functionally, component of the ubiquinol-cytochrome c reductase complex (complex III or cytochrome b-c1 complex) that is part of the mitochondrial respiratory chain. The b-c1 complex mediates electron transfer from ubiquinol to cytochrome c. Contributes to the generation of a proton gradient across the mitochondrial membrane that is then used for ATP synthesis. The polypeptide is Cytochrome b (MT-CYB) (Pelecanoides georgicus (South Georgia diving petrel)).